A 122-amino-acid polypeptide reads, in one-letter code: Large ribosomal subunit protein uL14c (122 aa).

This sequence belongs to the universal ribosomal protein uL14 family. Part of the 50S ribosomal subunit.

The protein localises to the plastid. It localises to the chloroplast. Binds to 23S rRNA. The chain is Large ribosomal subunit protein uL14c from Arabis hirsuta (Hairy rock-cress).